Reading from the N-terminus, the 367-residue chain is tRNA/tmRNA (uracil-C(5))-methyltransferase (367 aa).

Gln-182, Tyr-210, Asn-215, Glu-231, and Asp-293 together coordinate S-adenosyl-L-methionine. The active-site Nucleophile is Cys-318. Catalysis depends on Glu-352, which acts as the Proton acceptor.

This sequence belongs to the class I-like SAM-binding methyltransferase superfamily. RNA M5U methyltransferase family. TrmA subfamily.

The enzyme catalyses uridine(54) in tRNA + S-adenosyl-L-methionine = 5-methyluridine(54) in tRNA + S-adenosyl-L-homocysteine + H(+). It catalyses the reaction uridine(341) in tmRNA + S-adenosyl-L-methionine = 5-methyluridine(341) in tmRNA + S-adenosyl-L-homocysteine + H(+). Functionally, dual-specificity methyltransferase that catalyzes the formation of 5-methyluridine at position 54 (m5U54) in all tRNAs, and that of position 341 (m5U341) in tmRNA (transfer-mRNA). This Neisseria meningitidis serogroup C (strain 053442) protein is tRNA/tmRNA (uracil-C(5))-methyltransferase.